A 133-amino-acid chain; its full sequence is Large ribosomal subunit protein uL15 (133 aa).

The interval 1–58 is disordered; the sequence is MALQNLTPAPGSTHATKRLGRGQGSGNGKTAGKGNKGQRARKGYNEKRGFEGGQQPLQ. The segment covering 21-35 has biased composition (gly residues); sequence RGQGSGNGKTAGKGN.

This sequence belongs to the universal ribosomal protein uL15 family. Part of the 50S ribosomal subunit.

Functionally, binds to the 23S rRNA. In Campylobacter curvus (strain 525.92), this protein is Large ribosomal subunit protein uL15.